We begin with the raw amino-acid sequence, 389 residues long: MTHSAILGSKTYNQYFPKLTPGQLAENGKIKVIVGMSGGVDSSVSAFILQQQGYQVEGLFMKNWEEDDDTDYCTAAADLADAQAVCDKLGIRLHKINFATEYWDNVFEHFLSEYKAGRTPNPDILCNKEIKFKAFLEYAAEDLGADYIATGHYVRRSGPDHDAHLLRGLDNNKDQSYFLHALSKKQVGQSLFPVGEVEKTVVRAVAEELGLITAKKKDSTGICFIGERKFKDFLARFLPAQPGDIKTTEGEVIGRHQGLMYHTLGQRKGLGIGGIKGKDENAWYVVEKDLKNNVLVVAQGHDNSALQSSGLIAKQLTWVSEQPLRKTLHCTVKTRYRQTDIACEVVPVNDDTVEVHFDEPQIAVTPGQSAVFYQGEECLGGGIIETQIK.

ATP contacts are provided by residues 35–42 (GMSGGVDS) and Met61. The segment at 121 to 123 (NPD) is interaction with target base in tRNA. Cys126 (nucleophile) is an active-site residue. Cys126 and Cys223 are disulfide-bonded. Gly151 provides a ligand contact to ATP. Residues 173–175 (KDQ) are interaction with tRNA. Cys223 acts as the Cysteine persulfide intermediate in catalysis. The segment at 335–336 (RY) is interaction with tRNA.

Belongs to the MnmA/TRMU family.

It localises to the cytoplasm. The enzyme catalyses S-sulfanyl-L-cysteinyl-[protein] + uridine(34) in tRNA + AH2 + ATP = 2-thiouridine(34) in tRNA + L-cysteinyl-[protein] + A + AMP + diphosphate + H(+). Functionally, catalyzes the 2-thiolation of uridine at the wobble position (U34) of tRNA, leading to the formation of s(2)U34. The protein is tRNA-specific 2-thiouridylase MnmA of Actinobacillus succinogenes (strain ATCC 55618 / DSM 22257 / CCUG 43843 / 130Z).